A 199-amino-acid polypeptide reads, in one-letter code: Imidazole glycerol phosphate synthase subunit HisH 2 (199 aa).

The Glutamine amidotransferase type-1 domain maps to methionine 1–cysteine 199. Cysteine 76 (nucleophile) is an active-site residue. Catalysis depends on residues histidine 177 and glutamate 179.

In terms of assembly, heterodimer of HisH and HisF.

The protein resides in the cytoplasm. It catalyses the reaction 5-[(5-phospho-1-deoxy-D-ribulos-1-ylimino)methylamino]-1-(5-phospho-beta-D-ribosyl)imidazole-4-carboxamide + L-glutamine = D-erythro-1-(imidazol-4-yl)glycerol 3-phosphate + 5-amino-1-(5-phospho-beta-D-ribosyl)imidazole-4-carboxamide + L-glutamate + H(+). It carries out the reaction L-glutamine + H2O = L-glutamate + NH4(+). Its pathway is amino-acid biosynthesis; L-histidine biosynthesis; L-histidine from 5-phospho-alpha-D-ribose 1-diphosphate: step 5/9. IGPS catalyzes the conversion of PRFAR and glutamine to IGP, AICAR and glutamate. The HisH subunit provides the glutamine amidotransferase activity that produces the ammonia necessary to HisF for the synthesis of IGP and AICAR. This chain is Imidazole glycerol phosphate synthase subunit HisH 2, found in Legionella pneumophila (strain Lens).